The sequence spans 100 residues: Small ribosomal subunit protein uS14c (100 aa).

This sequence belongs to the universal ribosomal protein uS14 family. As to quaternary structure, part of the 30S ribosomal subunit.

It localises to the plastid. In terms of biological role, binds 16S rRNA, required for the assembly of 30S particles. The chain is Small ribosomal subunit protein uS14c from Cuscuta obtusiflora (Peruvian dodder).